Reading from the N-terminus, the 322-residue chain is Aspartate--ammonia ligase (322 aa).

Belongs to the class-II aminoacyl-tRNA synthetase family. AsnA subfamily.

The protein localises to the cytoplasm. It carries out the reaction L-aspartate + NH4(+) + ATP = L-asparagine + AMP + diphosphate + H(+). It functions in the pathway amino-acid biosynthesis; L-asparagine biosynthesis; L-asparagine from L-aspartate (ammonia route): step 1/1. In Lactiplantibacillus plantarum (strain ATCC BAA-793 / NCIMB 8826 / WCFS1) (Lactobacillus plantarum), this protein is Aspartate--ammonia ligase.